Reading from the N-terminus, the 191-residue chain is Molybdenum cofactor guanylyltransferase (191 aa).

GTP is bound by residues 11-13 (LCG), Lys-23, Asp-66, and Asp-97. Residue Asp-97 coordinates Mg(2+).

Belongs to the MobA family. Monomer. Mg(2+) serves as cofactor.

The protein resides in the cytoplasm. The catalysed reaction is Mo-molybdopterin + GTP + H(+) = Mo-molybdopterin guanine dinucleotide + diphosphate. Transfers a GMP moiety from GTP to Mo-molybdopterin (Mo-MPT) cofactor (Moco or molybdenum cofactor) to form Mo-molybdopterin guanine dinucleotide (Mo-MGD) cofactor. The chain is Molybdenum cofactor guanylyltransferase from Campylobacter jejuni subsp. jejuni serotype O:2 (strain ATCC 700819 / NCTC 11168).